The following is a 566-amino-acid chain: Proline--tRNA ligase (566 aa).

The protein belongs to the class-II aminoacyl-tRNA synthetase family. ProS type 1 subfamily. In terms of assembly, homodimer.

The protein resides in the cytoplasm. It catalyses the reaction tRNA(Pro) + L-proline + ATP = L-prolyl-tRNA(Pro) + AMP + diphosphate. Catalyzes the attachment of proline to tRNA(Pro) in a two-step reaction: proline is first activated by ATP to form Pro-AMP and then transferred to the acceptor end of tRNA(Pro). As ProRS can inadvertently accommodate and process non-cognate amino acids such as alanine and cysteine, to avoid such errors it has two additional distinct editing activities against alanine. One activity is designated as 'pretransfer' editing and involves the tRNA(Pro)-independent hydrolysis of activated Ala-AMP. The other activity is designated 'posttransfer' editing and involves deacylation of mischarged Ala-tRNA(Pro). The misacylated Cys-tRNA(Pro) is not edited by ProRS. This is Proline--tRNA ligase from Bacillus anthracis (strain A0248).